Reading from the N-terminus, the 217-residue chain is Small ribosomal subunit protein uS3c (217 aa).

The region spanning 39–109 (IRSCIEKQLH…QIRINLIEIT (71 aa)) is the KH type-2 domain.

The protein belongs to the universal ribosomal protein uS3 family. In terms of assembly, part of the 30S ribosomal subunit.

The protein localises to the plastid. Its subcellular location is the chloroplast. The protein is Small ribosomal subunit protein uS3c (rps3) of Gracilaria tenuistipitata var. liui (Red alga).